A 159-amino-acid polypeptide reads, in one-letter code: SsrA-binding protein (159 aa).

The tract at residues 133–159 (KKLHDKRETSKERDWNRQKNRLLKERG) is disordered. Positions 137 to 159 (DKRETSKERDWNRQKNRLLKERG) are enriched in basic and acidic residues.

Belongs to the SmpB family.

The protein resides in the cytoplasm. Functionally, required for rescue of stalled ribosomes mediated by trans-translation. Binds to transfer-messenger RNA (tmRNA), required for stable association of tmRNA with ribosomes. tmRNA and SmpB together mimic tRNA shape, replacing the anticodon stem-loop with SmpB. tmRNA is encoded by the ssrA gene; the 2 termini fold to resemble tRNA(Ala) and it encodes a 'tag peptide', a short internal open reading frame. During trans-translation Ala-aminoacylated tmRNA acts like a tRNA, entering the A-site of stalled ribosomes, displacing the stalled mRNA. The ribosome then switches to translate the ORF on the tmRNA; the nascent peptide is terminated with the 'tag peptide' encoded by the tmRNA and targeted for degradation. The ribosome is freed to recommence translation, which seems to be the essential function of trans-translation. This Sinorhizobium medicae (strain WSM419) (Ensifer medicae) protein is SsrA-binding protein.